Consider the following 491-residue polypeptide: Putative pentatricopeptide repeat-containing protein At1g02420 (491 aa).

PPR repeat units follow at residues 179 to 209, 210 to 244, 245 to 279, 280 to 314, 315 to 349, 350 to 384, 385 to 419, and 420 to 454; these read DTACFNALLRTLCQEKSMTDARNVYHSLKHQ, FQPDLQTFNILLSGWKSSEEAEAFFEEMKGKGLKP, DVVTYNSLIDVYCKDREIEKAYKLIDKMREEEETP, DVITYTTVIGGLGLIGQPDKAREVLKEMKEYGCYP, DVAAYNAAIRNFCIARRLGDADKLVDEMVKKGLSP, NATTYNLFFRVLSLANDLGRSWELYVRMLGNECLP, NTQSCMFLIKMFKRHEKVDMAMRLWEDMVVKGFGS, and YSLVSDVLLDLLCDLAKVEEAEKCLLEMVEKGHRP.

The protein belongs to the PPR family. P subfamily.

This Arabidopsis thaliana (Mouse-ear cress) protein is Putative pentatricopeptide repeat-containing protein At1g02420.